We begin with the raw amino-acid sequence, 211 residues long: Phosphoribosyl-dephospho-CoA transferase (211 aa).

Active-site residues include aspartate 136 and aspartate 138.

The protein belongs to the MdcG family.

It carries out the reaction apo-[malonate decarboxylase ACP] + 2'-(5''-triphospho-alpha-D-ribosyl)-3'-dephospho-CoA = holo-[malonate decarboxylase ACP] + diphosphate. Functionally, transfers 2'-(5-triphosphoribosyl)-3'-dephosphocoenzyme-A to the apo-[acyl-carrier-protein] of the malonate decarboxylase to yield holo-[acyl-carrier-protein]. The polypeptide is Phosphoribosyl-dephospho-CoA transferase (Pseudomonas syringae pv. tomato (strain ATCC BAA-871 / DC3000)).